Reading from the N-terminus, the 87-residue chain is U3-theraphotoxin-Hhn1a 15 (87 aa).

Residues 1–24 form the signal peptide; that stretch reads MVNMKASMFLTFAGLVLLLVVCYA. Positions 25 to 52 are excised as a propeptide; sequence SESEEKEFPKEMLSSIFAVDNDFKQEER. 3 cysteine pairs are disulfide-bonded: Cys-54-Cys-67, Cys-61-Cys-72, and Cys-66-Cys-79.

This sequence belongs to the neurotoxin 10 (Hwtx-1) family. 51 (Hntx-8) subfamily. Hntx-8 sub-subfamily. In terms of tissue distribution, expressed by the venom gland.

It localises to the secreted. In terms of biological role, ion channel inhibitor. The sequence is that of U3-theraphotoxin-Hhn1a 15 from Cyriopagopus hainanus (Chinese bird spider).